The sequence spans 117 residues: Large ribosomal subunit protein bL20 (117 aa).

It belongs to the bacterial ribosomal protein bL20 family.

In terms of biological role, binds directly to 23S ribosomal RNA and is necessary for the in vitro assembly process of the 50S ribosomal subunit. It is not involved in the protein synthesizing functions of that subunit. This is Large ribosomal subunit protein bL20 from Nitratidesulfovibrio vulgaris (strain DP4) (Desulfovibrio vulgaris).